The sequence spans 504 residues: Maturase K (504 aa).

The protein belongs to the intron maturase 2 family. MatK subfamily.

It localises to the plastid. The protein localises to the chloroplast. Usually encoded in the trnK tRNA gene intron. Probably assists in splicing its own and other chloroplast group II introns. The sequence is that of Maturase K from Guizotia abyssinica (Niger).